The chain runs to 322 residues: tRNA N6-adenosine threonylcarbamoyltransferase (322 aa).

Positions 109 and 113 each coordinate Fe cation. Residues 131–135 (LISGG), D164, G177, D181, and N277 contribute to the substrate site. D303 is a Fe cation binding site.

Belongs to the KAE1 / TsaD family. The cofactor is Fe(2+).

It localises to the cytoplasm. It carries out the reaction L-threonylcarbamoyladenylate + adenosine(37) in tRNA = N(6)-L-threonylcarbamoyladenosine(37) in tRNA + AMP + H(+). Required for the formation of a threonylcarbamoyl group on adenosine at position 37 (t(6)A37) in tRNAs that read codons beginning with adenine. Is involved in the transfer of the threonylcarbamoyl moiety of threonylcarbamoyl-AMP (TC-AMP) to the N6 group of A37, together with TsaE and TsaB. TsaD likely plays a direct catalytic role in this reaction. The polypeptide is tRNA N6-adenosine threonylcarbamoyltransferase (Mesomycoplasma hyopneumoniae (strain 232) (Mycoplasma hyopneumoniae)).